The following is a 506-amino-acid chain: Maturase K (506 aa).

Belongs to the intron maturase 2 family. MatK subfamily.

It is found in the plastid. It localises to the chloroplast. In terms of biological role, usually encoded in the trnK tRNA gene intron. Probably assists in splicing its own and other chloroplast group II introns. The sequence is that of Maturase K from Trifolium fragiferum (Strawberry clover).